Reading from the N-terminus, the 232-residue chain is Phosphatidylserine decarboxylase proenzyme (232 aa).

The Schiff-base intermediate with substrate; via pyruvic acid role is filled by serine 190. Residue serine 190 is modified to Pyruvic acid (Ser); by autocatalysis.

Belongs to the phosphatidylserine decarboxylase family. PSD-A subfamily. Heterodimer of a large membrane-associated beta subunit and a small pyruvoyl-containing alpha subunit. Pyruvate serves as cofactor. Post-translationally, is synthesized initially as an inactive proenzyme. Formation of the active enzyme involves a self-maturation process in which the active site pyruvoyl group is generated from an internal serine residue via an autocatalytic post-translational modification. Two non-identical subunits are generated from the proenzyme in this reaction, and the pyruvate is formed at the N-terminus of the alpha chain, which is derived from the carboxyl end of the proenzyme. The post-translation cleavage follows an unusual pathway, termed non-hydrolytic serinolysis, in which the side chain hydroxyl group of the serine supplies its oxygen atom to form the C-terminus of the beta chain, while the remainder of the serine residue undergoes an oxidative deamination to produce ammonia and the pyruvoyl prosthetic group on the alpha chain.

Its subcellular location is the cell membrane. It carries out the reaction a 1,2-diacyl-sn-glycero-3-phospho-L-serine + H(+) = a 1,2-diacyl-sn-glycero-3-phosphoethanolamine + CO2. It functions in the pathway phospholipid metabolism; phosphatidylethanolamine biosynthesis; phosphatidylethanolamine from CDP-diacylglycerol: step 2/2. Its function is as follows. Catalyzes the formation of phosphatidylethanolamine (PtdEtn) from phosphatidylserine (PtdSer). This chain is Phosphatidylserine decarboxylase proenzyme, found in Cereibacter sphaeroides (strain KD131 / KCTC 12085) (Rhodobacter sphaeroides).